The chain runs to 489 residues: Mitogen-activated protein kinase adapter protein MST50 (489 aa).

Residues Met-1 to Ser-56 form a disordered region. Positions Pro-37–Tyr-54 are enriched in polar residues. Positions Trp-69–Ala-132 constitute an SAM domain. 2 disordered regions span residues Pro-207–Arg-285 and Ser-309–Ala-379. Composition is skewed to polar residues over residues Pro-256–Gln-265 and Ala-328–Ala-346. In terms of domain architecture, Ras-associating spans Ser-377–Asn-457.

Interacts with MST7 and MST11. Interacts with MCK1, MKK2 and HIK1.

In terms of biological role, mitogen-activated protein kinase adapter protein; part of the MST11-MST7-PMK1 MAP kinase (MAPK) cascade that is essential for appressorium formation, penetration and invasive growth. Binds to the MAPKKK MST11 and the MAPKK MST7 to maintain the stability of the MST11-MST7 complex for the phosphorylation of the MAPK PMK1. Is also involved in the MPS1 and OSM1 MAPK pathways, and especially plays a role in the activation of MPS1 in response to cell wall stress. Its function differs in the 3 MAPK pathways. The sequence is that of Mitogen-activated protein kinase adapter protein MST50 from Pyricularia oryzae (strain 70-15 / ATCC MYA-4617 / FGSC 8958) (Rice blast fungus).